A 967-amino-acid polypeptide reads, in one-letter code: MAKGFYISKPVGILAILLGVAAVCTIIALSVVYSQEKNRSTESSTAASTAAPTGPTTTVATTLDQSKPWNVYRLPKTLIPDSYNVTLRPYLTPNNKGLYVFTGTNIVRFTCKESTNIVIIHSKRLNYTSHQGHMVALSGVGGFHPQPVIVRTELVELTEYLVVHLQEPLVAGRQYEMNSEFQGELADDLAGFYRSEYMENGVKKVLATTHMQATEARKSFPCFDEPAMKATFNITIIHPNNLVALSNMLPRGPSVPFGEDPTWKVTEFETTPIMSTYLLAYIVSEFSYVETRAPSGVLIRIWARPSAINQGHGDYALKVTGPILDFFSQHYDTPYPLNKSDQIALPDFNAGAMENWGLVTYRESALLYDRQSSSSGNQERVVTVIAHELAHQWFGNLVTLEWWNDLWLNEGFASYVEYLGADFAEPTWNLKDLMVLNDVYRVMAVDALASSHPLSTPASEINTPAQISEVFDSISYSKGASVLRMLSNFLTEDLFKMGIASYLHTYKYGNTIYLNLWEHLQQVVDKQPTIKLPDTVSAIMDRWILQMGFPVITVDTQTGTISQQHFLLDPQSVVTRPSQFNYLWIVPISSVRSGSPQAHYWLPGVEKAQNDLFKTTANDWVLLNLNVTGYYLVNYDNENWKKIQTQLQTDLSVIPVINRAQVIHDAFNLASAQKVPVTLALNNTLFLIQETEYMPWQAALSSLSYFKLMFDRSEVYGPMKRYLKKQVTPLFNHFERVTKNWTDHPQTLMDQYSEINAVSTACSYGVPECEKLAATLFAQWKKNPQNNPIHPNLRSTVYCNAIAQGGEEEWNFVWEQFLKAELVNEADKLRGALACSNQVWILNRFLSYTLDPNLIRKQDVTSTLSSISSNVVGQTLVWDFVQSNWKKLFQDYGTGSFSFSNLIQAVTRRFSTEFELQQLEQFKKNNMDTGFGSATRALEQALEKTKANLKWVKENKDVVLRWFTENS.

At 1–8 (MAKGFYIS) the chain is on the cytoplasmic side. The helical; Signal-anchor for type II membrane protein transmembrane segment at 9–32 (KPVGILAILLGVAAVCTIIALSVV) threads the bilayer. Positions 33–66 (YSQEKNRSTESSTAASTAAPTGPTTTVATTLDQS) are cytosolic Ser/Thr-rich junction. The Extracellular portion of the chain corresponds to 33-967 (YSQEKNRSTE…VVLRWFTENS (935 aa)). Asn38 is a glycosylation site (N-linked (GlcNAc...) asparagine). Residues 41 to 61 (TESSTAASTAAPTGPTTTVAT) form a disordered region. The metalloprotease stretch occupies residues 67–967 (KPWNVYRLPK…VVLRWFTENS (901 aa)). 2 N-linked (GlcNAc...) asparagine glycosylation sites follow: Asn84 and Asn126. Sulfotyrosine is present on Tyr175. N-linked (GlcNAc...) asparagine glycans are attached at residues Asn233 and Asn338. 351 to 355 (GAMEN) lines the substrate pocket. His387 contributes to the Zn(2+) binding site. The active-site Proton acceptor is Glu388. Residues His391 and Glu410 each coordinate Zn(2+). A Sulfotyrosine modification is found at Tyr418. Asn626, Asn682, and Asn740 each carry an N-linked (GlcNAc...) asparagine glycan. The interval 670–840 (ASAQKVPVTL…GALACSNQVW (171 aa)) is interaction with FCoV and TGEV spike glycoprotein. Intrachain disulfides connect Cys762-Cys769 and Cys799-Cys835.

It belongs to the peptidase M1 family. As to quaternary structure, homodimer. Interacts with SLC6A19. (Microbial infection) Interacts with FCoV, CCoV, TGEV and HCoV-229E spike glycoprotein. It depends on Zn(2+) as a cofactor. In terms of processing, sulfated. N- and O-glycosylated. Post-translationally, may undergo proteolysis and give rise to a soluble form.

The protein resides in the cell membrane. It catalyses the reaction Release of an N-terminal amino acid, Xaa-|-Yaa- from a peptide, amide or arylamide. Xaa is preferably Ala, but may be most amino acids including Pro (slow action). When a terminal hydrophobic residue is followed by a prolyl residue, the two may be released as an intact Xaa-Pro dipeptide.. Broad specificity aminopeptidase which plays a role in the final digestion of peptides generated from hydrolysis of proteins by gastric and pancreatic proteases. Also involved in the processing of various peptides including peptide hormones, such as angiotensin III and IV, neuropeptides, and chemokines. May also be involved the cleavage of peptides bound to major histocompatibility complex class II molecules of antigen presenting cells. May have a role in angiogenesis and promote cholesterol crystallization. May have a role in amino acid transport by acting as binding partner of amino acid transporter SLC6A19 and regulating its activity. Functionally, (Microbial infection) In case of feline coronavirus (FCoV) infection, serves as a receptor for FCoV spike glycoprotein. It is as well a receptor for other serogroup I coronaviruses, like canine coronavirus (CCoV), porcine transmissible gastroenteritis virus (TGEV), and human coronavirus 229E (HCoV-229E). Also serves as a receptor for infectious bronchitis virus (IBV, Arkansas 99 serotype) in serogroup III. The sequence is that of Aminopeptidase N (ANPEP) from Felis catus (Cat).